The chain runs to 329 residues: Beta-1,3-galactosyltransferase 6 (329 aa).

Over 1–11 the chain is Cytoplasmic; sequence MKLLRRAWRRR. Residues 12 to 34 form a helical; Signal-anchor for type II membrane protein membrane-spanning segment; that stretch reads AALGLGTLALCGAALLYLARCAA. The Lumenal portion of the chain corresponds to 35-329; sequence EPGDPRAMSG…QCCQRREGIP (295 aa). N-linked (GlcNAc...) asparagine glycosylation occurs at Asn-131.

It belongs to the glycosyltransferase 31 family. The cofactor is Mn(2+). Ubiquitous.

It is found in the golgi apparatus. The protein resides in the golgi stack membrane. It catalyses the reaction 3-O-(beta-D-galactosyl-(1-&gt;4)-beta-D-xylosyl)-L-seryl-[protein] + UDP-alpha-D-galactose = 3-O-(beta-D-galactosyl-(1-&gt;3)-beta-D-galactosyl-(1-&gt;4)-beta-D-xylosyl)-L-seryl-[protein] + UDP + H(+). It participates in glycan metabolism; chondroitin sulfate biosynthesis. The protein operates within glycan metabolism; heparan sulfate biosynthesis. Functionally, beta-1,3-galactosyltransferase that transfers galactose from UDP-galactose to substrates with a terminal beta-linked galactose residue. Has a preference for galactose-beta-1,4-xylose that is found in the linker region of glycosaminoglycans, such as heparan sulfate and chondroitin sulfate. Has no activity towards substrates with terminal glucosamine or galactosamine residues. In Homo sapiens (Human), this protein is Beta-1,3-galactosyltransferase 6 (B3GALT6).